The following is a 342-amino-acid chain: Phosphate acyltransferase (342 aa).

It belongs to the PlsX family. As to quaternary structure, homodimer. Probably interacts with PlsY.

The protein resides in the cytoplasm. It catalyses the reaction a fatty acyl-[ACP] + phosphate = an acyl phosphate + holo-[ACP]. It functions in the pathway lipid metabolism; phospholipid metabolism. In terms of biological role, catalyzes the reversible formation of acyl-phosphate (acyl-PO(4)) from acyl-[acyl-carrier-protein] (acyl-ACP). This enzyme utilizes acyl-ACP as fatty acyl donor, but not acyl-CoA. The protein is Phosphate acyltransferase of Blochmanniella pennsylvanica (strain BPEN).